We begin with the raw amino-acid sequence, 466 residues long: Neuropeptide Y receptor type 5 (466 aa).

The Extracellular segment spans residues 1–63 (MEVKLEEHFN…YRGSVDDLQY (63 aa)). Asparagine 10, asparagine 17, asparagine 38, and asparagine 39 each carry an N-linked (GlcNAc...) asparagine glycan. The helical transmembrane segment at 64-84 (FLIGLYTFVSLLGFMGNLLIL) threads the bilayer. Residues 85-98 (MAVMKKRNQKTTVN) lie on the Cytoplasmic side of the membrane. Residues 99 to 119 (FLIGNLAFSDILVVLFCSPFT) form a helical membrane-spanning segment. Over 120–138 (LTSVLLDQWMFGKAMCHIM) the chain is Extracellular. Residues cysteine 135 and cysteine 219 are joined by a disulfide bond. Residues 139–159 (PFLQCVSVLVSTLILISIAIV) traverse the membrane as a helical segment. Residues 160-177 (RYHMIKHPISNNLTANHG) are Cytoplasmic-facing. Residues 178–198 (YFLIATVWTLGFAICSPLPVF) form a helical membrane-spanning segment. Over 199–229 (HSLVELKETFGSALLSSKYLCVESWPSDSYR) the chain is Extracellular. A helical transmembrane segment spans residues 230–250 (IAFTISLLLVQYILPLVCLTV). Over 251 to 389 (SHTSVCRSIS…KKRSRSVFYR (139 aa)) the chain is Cytoplasmic. Positions 323–346 (GPSQEKHLTVPENPGSVRSQLSPS) are disordered. Residues 390-410 (LTILILVFAVSWMPLHVFHVV) traverse the membrane as a helical segment. The Extracellular segment spans residues 411 to 427 (TDFNDNLISNRHFKLVY). The chain crosses the membrane as a helical span at residues 428–448 (CICHLLGMMSCCLNPILYGFL). The Cytoplasmic segment spans residues 449–466 (NNGIKADLRALIHCLHMS). The S-palmitoyl cysteine moiety is linked to residue cysteine 462.

It belongs to the G-protein coupled receptor 1 family.

The protein resides in the cell membrane. Functionally, receptor for neuropeptide Y and peptide YY. The activity of this receptor is mediated by G proteins that inhibit adenylate cyclase activity. Seems to be associated with food intake. Could be involved in feeding disorders. This is Neuropeptide Y receptor type 5 (Npy5r) from Mus musculus (Mouse).